We begin with the raw amino-acid sequence, 72 residues long: Cytochrome c oxidase subunit 2 (72 aa).

Topologically, residues 1–14 (MAHPSQLGFQDAAS) are mitochondrial intermembrane. The helical transmembrane segment at 15–45 (PVMEELLHFHDHALMIVFLISTLVLYIIVAM) threads the bilayer. The Mitochondrial matrix segment spans residues 46-72 (VSTKLTNKYXLDSQEIEVIWTXLPAVI).

This sequence belongs to the cytochrome c oxidase subunit 2 family. In terms of assembly, component of the cytochrome c oxidase (complex IV, CIV), a multisubunit enzyme composed of 14 subunits. The complex is composed of a catalytic core of 3 subunits MT-CO1, MT-CO2 and MT-CO3, encoded in the mitochondrial DNA, and 11 supernumerary subunits COX4I, COX5A, COX5B, COX6A, COX6B, COX6C, COX7A, COX7B, COX7C, COX8 and NDUFA4, which are encoded in the nuclear genome. The complex exists as a monomer or a dimer and forms supercomplexes (SCs) in the inner mitochondrial membrane with NADH-ubiquinone oxidoreductase (complex I, CI) and ubiquinol-cytochrome c oxidoreductase (cytochrome b-c1 complex, complex III, CIII), resulting in different assemblies (supercomplex SCI(1)III(2)IV(1) and megacomplex MCI(2)III(2)IV(2)). Found in a complex with TMEM177, COA6, COX18, COX20, SCO1 and SCO2. Interacts with TMEM177 in a COX20-dependent manner. Interacts with COX20. Interacts with COX16. Cu cation serves as cofactor.

It localises to the mitochondrion inner membrane. The catalysed reaction is 4 Fe(II)-[cytochrome c] + O2 + 8 H(+)(in) = 4 Fe(III)-[cytochrome c] + 2 H2O + 4 H(+)(out). Functionally, component of the cytochrome c oxidase, the last enzyme in the mitochondrial electron transport chain which drives oxidative phosphorylation. The respiratory chain contains 3 multisubunit complexes succinate dehydrogenase (complex II, CII), ubiquinol-cytochrome c oxidoreductase (cytochrome b-c1 complex, complex III, CIII) and cytochrome c oxidase (complex IV, CIV), that cooperate to transfer electrons derived from NADH and succinate to molecular oxygen, creating an electrochemical gradient over the inner membrane that drives transmembrane transport and the ATP synthase. Cytochrome c oxidase is the component of the respiratory chain that catalyzes the reduction of oxygen to water. Electrons originating from reduced cytochrome c in the intermembrane space (IMS) are transferred via the dinuclear copper A center (CU(A)) of subunit 2 and heme A of subunit 1 to the active site in subunit 1, a binuclear center (BNC) formed by heme A3 and copper B (CU(B)). The BNC reduces molecular oxygen to 2 water molecules using 4 electrons from cytochrome c in the IMS and 4 protons from the mitochondrial matrix. This Gomphosus varius (Bird wrasse) protein is Cytochrome c oxidase subunit 2 (mt-co2).